Reading from the N-terminus, the 473-residue chain is Ribulose bisphosphate carboxylase large chain (473 aa).

Lys8 is subject to N6,N6,N6-trimethyllysine. 2 residues coordinate substrate: Asn117 and Thr167. The active-site Proton acceptor is the Lys169. Residue Lys171 coordinates substrate. Residues Lys195, Asp197, and Glu198 each coordinate Mg(2+). Lys195 is subject to N6-carboxylysine. His288 acts as the Proton acceptor in catalysis. Residues Arg289, His321, and Ser373 each coordinate substrate.

This sequence belongs to the RuBisCO large chain family. Type I subfamily. As to quaternary structure, heterohexadecamer of 8 large chains and 8 small chains; disulfide-linked. The disulfide link is formed within the large subunit homodimers. Mg(2+) serves as cofactor. Post-translationally, the disulfide bond which can form in the large chain dimeric partners within the hexadecamer appears to be associated with oxidative stress and protein turnover.

It localises to the plastid. The protein resides in the chloroplast. It carries out the reaction 2 (2R)-3-phosphoglycerate + 2 H(+) = D-ribulose 1,5-bisphosphate + CO2 + H2O. It catalyses the reaction D-ribulose 1,5-bisphosphate + O2 = 2-phosphoglycolate + (2R)-3-phosphoglycerate + 2 H(+). In terms of biological role, ruBisCO catalyzes two reactions: the carboxylation of D-ribulose 1,5-bisphosphate, the primary event in carbon dioxide fixation, as well as the oxidative fragmentation of the pentose substrate in the photorespiration process. Both reactions occur simultaneously and in competition at the same active site. This chain is Ribulose bisphosphate carboxylase large chain, found in Amorphophallus titanum (Titan arum).